Consider the following 330-residue polypeptide: 4-hydroxythreonine-4-phosphate dehydrogenase (330 aa).

His-136 and Thr-137 together coordinate substrate. 3 residues coordinate a divalent metal cation: His-166, His-211, and His-266. Lys-274, Asn-283, and Arg-292 together coordinate substrate.

Belongs to the PdxA family. In terms of assembly, homodimer. Zn(2+) serves as cofactor. Mg(2+) is required as a cofactor. Requires Co(2+) as cofactor.

The protein resides in the cytoplasm. The enzyme catalyses 4-(phosphooxy)-L-threonine + NAD(+) = 3-amino-2-oxopropyl phosphate + CO2 + NADH. It participates in cofactor biosynthesis; pyridoxine 5'-phosphate biosynthesis; pyridoxine 5'-phosphate from D-erythrose 4-phosphate: step 4/5. Catalyzes the NAD(P)-dependent oxidation of 4-(phosphooxy)-L-threonine (HTP) into 2-amino-3-oxo-4-(phosphooxy)butyric acid which spontaneously decarboxylates to form 3-amino-2-oxopropyl phosphate (AHAP). This chain is 4-hydroxythreonine-4-phosphate dehydrogenase, found in Serratia proteamaculans (strain 568).